The primary structure comprises 127 residues: Aspartate 1-decarboxylase (127 aa).

Ser-25 (schiff-base intermediate with substrate; via pyruvic acid) is an active-site residue. Position 25 is a pyruvic acid (Ser) (Ser-25). Thr-57 contributes to the substrate binding site. Catalysis depends on Tyr-58, which acts as the Proton donor. 73 to 75 (GAA) is a binding site for substrate.

It belongs to the PanD family. Heterooctamer of four alpha and four beta subunits. The cofactor is pyruvate. Is synthesized initially as an inactive proenzyme, which is activated by self-cleavage at a specific serine bond to produce a beta-subunit with a hydroxyl group at its C-terminus and an alpha-subunit with a pyruvoyl group at its N-terminus.

It is found in the cytoplasm. It carries out the reaction L-aspartate + H(+) = beta-alanine + CO2. It functions in the pathway cofactor biosynthesis; (R)-pantothenate biosynthesis; beta-alanine from L-aspartate: step 1/1. Functionally, catalyzes the pyruvoyl-dependent decarboxylation of aspartate to produce beta-alanine. The polypeptide is Aspartate 1-decarboxylase (Bacillus cytotoxicus (strain DSM 22905 / CIP 110041 / 391-98 / NVH 391-98)).